Consider the following 190-residue polypeptide: Holliday junction branch migration complex subunit RuvA (190 aa).

Positions 1–64 (MIGKLTGTLL…EDAQLLYGFG (64 aa)) are domain I. Positions 65-143 (THSERQAFRE…ADTGAQSLFV (79 aa)) are domain II. The segment at 144–148 (NNDQN) is flexible linker. The interval 148–190 (NDIVQALMALGYSDKDAAAALKKLPPDVGVTEGIKLALKALAK) is domain III.

The protein belongs to the RuvA family. Homotetramer. Forms an RuvA(8)-RuvB(12)-Holliday junction (HJ) complex. HJ DNA is sandwiched between 2 RuvA tetramers; dsDNA enters through RuvA and exits via RuvB. An RuvB hexamer assembles on each DNA strand where it exits the tetramer. Each RuvB hexamer is contacted by two RuvA subunits (via domain III) on 2 adjacent RuvB subunits; this complex drives branch migration. In the full resolvosome a probable DNA-RuvA(4)-RuvB(12)-RuvC(2) complex forms which resolves the HJ.

The protein resides in the cytoplasm. Its function is as follows. The RuvA-RuvB-RuvC complex processes Holliday junction (HJ) DNA during genetic recombination and DNA repair, while the RuvA-RuvB complex plays an important role in the rescue of blocked DNA replication forks via replication fork reversal (RFR). RuvA specifically binds to HJ cruciform DNA, conferring on it an open structure. The RuvB hexamer acts as an ATP-dependent pump, pulling dsDNA into and through the RuvAB complex. HJ branch migration allows RuvC to scan DNA until it finds its consensus sequence, where it cleaves and resolves the cruciform DNA. The chain is Holliday junction branch migration complex subunit RuvA from Delftia acidovorans (strain DSM 14801 / SPH-1).